Here is a 156-residue protein sequence, read N- to C-terminus: MDVGVGGKAAKKAVGRKLGGPKKKPVSRSVKAGLQFPVGRIGRYLKKGRYAQRVGTGAPVYLAAVLEYLAAEVLELAGNAARDNKKNRIIPRHVLLAIRNDEELGKLLAGVTIAHGGVLPNINPVLLPKKTAEKADKPAKASKDKAAKSPKKQARS.

Disordered stretches follow at residues 1–26 and 129–156; these read MDVGVGGKAAKKAVGRKLGGPKKKPV and KKTAEKADKPAKASKDKAAKSPKKQARS. Residues 9 to 26 are compositionally biased toward basic residues; that stretch reads AAKKAVGRKLGGPKKKPV. Residues 130-147 are compositionally biased toward basic and acidic residues; sequence KTAEKADKPAKASKDKAA. The SPKK motif signature appears at 149-152; it reads SPKK.

Belongs to the histone H2A family. As to quaternary structure, the nucleosome is a histone octamer containing two molecules each of H2A, H2B, H3 and H4 assembled in one H3-H4 heterotetramer and two H2A-H2B heterodimers. The octamer wraps approximately 147 bp of DNA.

Its subcellular location is the nucleus. The protein resides in the chromosome. In terms of biological role, core component of nucleosome. Nucleosomes wrap and compact DNA into chromatin, limiting DNA accessibility to the cellular machineries which require DNA as a template. Histones thereby play a central role in transcription regulation, DNA repair, DNA replication and chromosomal stability. DNA accessibility is regulated via a complex set of post-translational modifications of histones, also called histone code, and nucleosome remodeling. The chain is Probable histone H2A.6 from Oryza sativa subsp. indica (Rice).